The primary structure comprises 262 residues: ELL-associated factor 2 (262 aa).

Residues 17–104 form a necessary for interaction with ELL region; that stretch reads LKLGESFEKQ…TGECRLEKLS (88 aa). Polar residues predominate over residues 124 to 144; sequence LEQQQQQMWNPPRTSNLVQHS. Disordered regions lie at residues 124–154 and 170–232; these read LEQQ…SPTS and MDQM…ADTT. 3 positions are modified to phosphoserine: serine 146, serine 151, and serine 154. The segment covering 174–192 has biased composition (low complexity); the sequence is SSCDSSSDSRSSSSSSSED. Residues 177–262 are necessary for transactivation activity; sequence DSSSDSRSSS…LSESDSDSED (86 aa). The tract at residues 248-262 is necessary for interaction with TCEA1 and transactivation activity; that stretch reads RSDLQLSESDSDSED.

Belongs to the EAF family. Component of the super elongation complex (SEC), at least composed of EAF1, EAF2, CDK9, MLLT3/AF9, AFF (AFF1 or AFF4), the P-TEFb complex and ELL (ELL, ELL2 or ELL3). Interacts with ELL, ELL2 and TCEA1.

It localises to the nucleus speckle. Its function is as follows. Acts as a transcriptional transactivator of ELL, ELL2 and TCEA1 elongation activities. Potent inducer of apoptosis in prostatic and non-prostatic cell lines. In Rattus norvegicus (Rat), this protein is ELL-associated factor 2 (Eaf2).